Reading from the N-terminus, the 508-residue chain is Probable cytochrome P450 6d5 (508 aa).

Residue C453 coordinates heme.

The protein belongs to the cytochrome P450 family. Heme is required as a cofactor.

The protein resides in the endoplasmic reticulum membrane. Its subcellular location is the microsome membrane. Functionally, may be involved in the metabolism of insect hormones and in the breakdown of synthetic insecticides. The sequence is that of Probable cytochrome P450 6d5 (Cyp6d5) from Drosophila melanogaster (Fruit fly).